We begin with the raw amino-acid sequence, 1050 residues long: Calmodulin-binding transcription activator 2 (1050 aa).

The CG-1 DNA-binding region spans 15–141 (IKQLLSEAQH…YLEVKGNRMS (127 aa)). Polar residues-rich tracts occupy residues 141 to 171 (STSG…SSIL) and 183 to 196 (SRQA…NPEP). Disordered regions lie at residues 141 to 196 (STSG…NPEP) and 223 to 246 (NRDG…SGDV). ANK repeat units lie at residues 661–690 (DGQG…SINF) and 694–723 (NGWS…DAGA). 2 IQ domains span residues 870–899 (VHAA…RIVK) and 893–922 (IRQR…SVGL). The tract at residues 918-940 (WSVGLLEKIILRWRRKGSGLRGF) is calmodulin-binding. Residues 957 to 985 (QEDDYDFLKEGRKQTEERLQKALTRVKSM) adopt a coiled-coil conformation. Position 984 is a phosphoserine (S984).

It belongs to the CAMTA family. Expressed in roots, stems, old leaves, petals, sepals, top of carpels, stigmas, stamen filaments, anthers and siliques, but not in pollen.

The protein resides in the nucleus. Functionally, transcription activator that binds to the DNA consensus sequence 5'-[ACG]CGCG[GTC]-3'. Regulates transcriptional activity in response to calcium signals. Binds calmodulin in a calcium-dependent manner. Involved in freezing tolerance in association with CAMTA1 and CAMTA3. Contributes together with CAMTA1 and CAMTA3 to the positive regulation of the cold-induced expression of DREB1A/CBF3, DREB1B/CBF1 and DREB1C/CBF2. Involved together with CAMTA3 and CAMTA4 in the positive regulation of a general stress response. Involved in tolerance to aluminum. Binds to the promoter of ALMT1 transporter and contributes to the positive regulation of aluminum-induced expression of ALMT1. This chain is Calmodulin-binding transcription activator 2, found in Arabidopsis thaliana (Mouse-ear cress).